The sequence spans 192 residues: Probable thymidylate kinase (192 aa).

7–14 (GIDGAGKS) contributes to the ATP binding site.

This sequence belongs to the thymidylate kinase family.

It carries out the reaction dTMP + ATP = dTDP + ADP. The sequence is that of Probable thymidylate kinase from Methanobrevibacter smithii (strain ATCC 35061 / DSM 861 / OCM 144 / PS).